A 450-amino-acid polypeptide reads, in one-letter code: NADP-specific glutamate dehydrogenase (450 aa).

K114 is a catalytic residue.

It belongs to the Glu/Leu/Phe/Val dehydrogenases family. In terms of assembly, homohexamer.

The enzyme catalyses L-glutamate + NADP(+) + H2O = 2-oxoglutarate + NH4(+) + NADPH + H(+). This is NADP-specific glutamate dehydrogenase (gdhA) from Botryotinia fuckeliana (Noble rot fungus).